Consider the following 143-residue polypeptide: Ribosome maturation factor RimP (143 aa).

It belongs to the RimP family.

The protein resides in the cytoplasm. Required for maturation of 30S ribosomal subunits. This is Ribosome maturation factor RimP from Neisseria gonorrhoeae (strain ATCC 700825 / FA 1090).